Reading from the N-terminus, the 465-residue chain is Methionine aminopeptidase 2-2 (465 aa).

Residues 1-11 show a composition bias toward basic residues; the sequence is MGSKTPHNHRR. The interval 1-89 is disordered; it reads MGSKTPHNHR…KKKKNTKELE (89 aa). Residues 43–54 are compositionally biased toward acidic residues; sequence GESEGGEDEDDD. Positions 73–84 are enriched in basic residues; it reads RNKRKKKKKKKN. H217 provides a ligand contact to substrate. A divalent metal cation-binding residues include D238, D249, and H318. H326 serves as a coordination point for substrate. Residues E351 and E446 each contribute to the a divalent metal cation site.

Belongs to the peptidase M24A family. Methionine aminopeptidase eukaryotic type 2 subfamily. The cofactor is Co(2+). It depends on Zn(2+) as a cofactor. Mn(2+) is required as a cofactor. Fe(2+) serves as cofactor.

It localises to the cytoplasm. The enzyme catalyses Release of N-terminal amino acids, preferentially methionine, from peptides and arylamides.. Functionally, cotranslationally removes the N-terminal methionine from nascent proteins. The N-terminal methionine is often cleaved when the second residue in the primary sequence is small and uncharged (Met-Ala-, Cys, Gly, Pro, Ser, Thr, or Val). In Ajellomyces capsulatus (strain G186AR / H82 / ATCC MYA-2454 / RMSCC 2432) (Darling's disease fungus), this protein is Methionine aminopeptidase 2-2.